A 263-amino-acid chain; its full sequence is uncharacterized protein (263 aa).

An N-terminal signal peptide occupies residues 1-22 (MEYLKRLALLISVIILTIFIMG). Cysteine 23 carries the N-palmitoyl cysteine lipid modification. The S-diacylglycerol cysteine moiety is linked to residue cysteine 23.

It belongs to the staphylococcal tandem lipoprotein family.

Its subcellular location is the cell membrane. This is an uncharacterized protein from Staphylococcus aureus (strain COL).